The sequence spans 179 residues: Small ribosomal subunit protein uS7 (179 aa).

It belongs to the universal ribosomal protein uS7 family. As to quaternary structure, part of the 30S ribosomal subunit. Contacts proteins S9 and S11. Cross-links to IF3 and the P and E site tRNAs.

One of the primary rRNA binding proteins, it binds directly to 16S rRNA where it nucleates assembly of the head domain of the 30S subunit. Is located at the subunit interface close to the decoding center, where it has been shown to contact mRNA. Has been shown to contact tRNA in both the P and E sites; it probably blocks exit of the E site tRNA. Its function is as follows. Protein S7 is also a translational repressor protein; it regulates the expression of the str operon members to different degrees by binding to its mRNA. This Escherichia coli (strain K12) protein is Small ribosomal subunit protein uS7 (rpsG).